Consider the following 437-residue polypeptide: Aromatic peroxidase fscJ (437 aa).

Residues 1–19 (MKWLHLLSVVACVADEVYA) form the signal peptide. Cysteine 83 is a heme binding site.

Belongs to the chloroperoxidase family. Requires heme b as cofactor.

The protein operates within secondary metabolite biosynthesis. Aromatic peroxidase; part of the fragmented gene cluster that mediates the biosynthesis of fusarochromene, a tryptophan-derived metabolite closely related to a group of mycotoxins including fusarochromanone. The role of fscJ within the pathway has not been identified yet. The first step of the pathway is the epimerization of L-tryptophan to D-tryptophan in the presence of the NRPS-like tryptophan epimerase fscC. D-tryptophan is subsequently hydroxylated by the tryptophan 6-hydroxylase fscE to yield 6-hydroxytryptophan. The pyrrole ring undergoes cleavaged by the tryptophan 2,3-dioxygenase fscD and is finally converted to 4-hydroxykyrunenine by the hydrolase fscH. The NRPS-like oxidoreductase fscA reduces the carboxyl group to primary alcohol and the DMATS-type prenyltransferase fscG performs prenylation, followed by the formation of a chromene ring catalyzed by the oxidoreductase fscI, which leads to desacetylfusarochromene. Epoxidation by fscF and rearrangement reactions of chromene double bonds convert compound desacetylfusarochromene to fusarochromanones. Although specific acetyltransferases were not found near the fsc gene cluster, several predicted enzymes containing the N-acetyltransferase superfamily domain are present in the genome of F.equiseti. These predicted enzymes may have the potential to convert desacetylfusarochromene to fusarochromene. This is Aromatic peroxidase fscJ from Fusarium equiseti (Fusarium scirpi).